Consider the following 91-residue polypeptide: YcgL domain-containing protein ESA_01460 (91 aa).

The 85-residue stretch at 1-85 (MFCVIYRSAR…PPENLLKQHL (85 aa)) folds into the YcgL domain.

This chain is YcgL domain-containing protein ESA_01460, found in Cronobacter sakazakii (strain ATCC BAA-894) (Enterobacter sakazakii).